The primary structure comprises 220 residues: Small ribosomal subunit protein uS3 (220 aa).

Positions 38 to 106 constitute a KH type-2 domain; it reads IRKYVKGRLK…RVHININEIK (69 aa).

It belongs to the universal ribosomal protein uS3 family. Part of the 30S ribosomal subunit. Forms a tight complex with proteins S10 and S14.

In terms of biological role, binds the lower part of the 30S subunit head. Binds mRNA in the 70S ribosome, positioning it for translation. This is Small ribosomal subunit protein uS3 from Brevibacillus brevis (strain 47 / JCM 6285 / NBRC 100599).